The chain runs to 605 residues: ATP-dependent RNA helicase DBP3 (605 aa).

Positions 1–124 are disordered; that stretch reads MSAEELVASP…TPALSKKQQK (124 aa). Residues 54–66 show a composition bias toward basic residues; that stretch reads KDKKDKKEKKDKK. Polar residues predominate over residues 104–114; it reads PVSTATPTESE. The Q motif motif lies at 175–201; it reads LSIRDLPINSKLQPFLNKFEKPTPIQA. The region spanning 204-391 is the Helicase ATP-binding domain; that stretch reads WPALLSKKDV…STFLNNPLRI (188 aa). 217 to 224 contacts ATP; that stretch reads AETGSGKT. The short motif at 336-339 is the DEAD box element; that stretch reads DEAD. In terms of domain architecture, Helicase C-terminal spans 424 to 575; the sequence is HLKAHLKVHP…EIPKEMDRFP (152 aa).

This sequence belongs to the DEAD box helicase family. DDX5/DBP2 subfamily.

The protein resides in the nucleus. It is found in the nucleolus. It catalyses the reaction ATP + H2O = ADP + phosphate + H(+). Functionally, ATP-dependent RNA helicase required for 60S ribosomal subunit synthesis. Involved in efficient pre-rRNA processing, predominantly at site A3, which is necessary for the normal formation of 25S and 5.8S rRNAs. This chain is ATP-dependent RNA helicase DBP3 (DBP3), found in Cryptococcus neoformans var. neoformans serotype D (strain JEC21 / ATCC MYA-565) (Filobasidiella neoformans).